A 300-amino-acid chain; its full sequence is uncharacterized protein (300 aa).

It belongs to the histone deacetylase family.

Its function is as follows. Putative deacetylase. This is an uncharacterized protein from Picosynechococcus sp. (strain ATCC 27264 / PCC 7002 / PR-6) (Agmenellum quadruplicatum).